The sequence spans 472 residues: MIRVFNTLGRRKEVFNPYSPPLVGMYVCGPTVYDYTHIGHARTFTVFDAIKRYLRLRGYDVFHVQNITDIDDKIINRAREEGRDWREIVREYSRDYLEGLGSLGIQIDHHPRVTDHISDIIRFIEGLIEKGYAYVAESGSVYFEVDKYPGYGMLSGHLSKEAWRQEEDVLHEKKSPYDFALWKAAKPGEPSWESPWGRGRPGWHIECSVMSSRYLGSRIDIHGGGVDLVFPHHENERAQSESYFGHRWVRYWLHASYLTIKGEKMSKSLGNIIPLREALREWGPGPLRLWLLSSHYRSNLDYSEEALGQYRRLYERLRQAADSIGRRLERAEPKGRLGEGELETVERLKGVVRRWHEAMSDDFNMGKAMSSLWEFTTIYFREVEQTESYTLLWLSWRILTGFNSVYAFAPDIVEARRPERSLEDSLVQALVDVRSELRRRKMYDLADEIRSRLAQLGFVLHDKGEKTEWRRR.

Cys28 is a binding site for Zn(2+). Residues Pro30 to His40 carry the 'HIGH' region motif. Cys207, His232, and Glu236 together coordinate Zn(2+). A 'KMSKS' region motif is present at residues Lys264 to Ser268. Lys267 contributes to the ATP binding site.

Belongs to the class-I aminoacyl-tRNA synthetase family. The cofactor is Zn(2+).

It localises to the cytoplasm. The enzyme catalyses tRNA(Cys) + L-cysteine + ATP = L-cysteinyl-tRNA(Cys) + AMP + diphosphate. The chain is Cysteine--tRNA ligase (cysS) from Aeropyrum pernix (strain ATCC 700893 / DSM 11879 / JCM 9820 / NBRC 100138 / K1).